Consider the following 109-residue polypeptide: Thioredoxin 1 (109 aa).

The Thioredoxin domain maps to 2 to 109 (SDKIIHLTDD…LKEFLDANLA (108 aa)). Residues cysteine 33 and cysteine 36 each act as nucleophile in the active site. An intrachain disulfide couples cysteine 33 to cysteine 36. Lysine 70 is modified (N6-acetyllysine).

It belongs to the thioredoxin family. As to quaternary structure, monomer.

Functionally, participates in various redox reactions through the reversible oxidation of its active center dithiol to a disulfide and catalyzes dithiol-disulfide exchange reactions. The sequence is that of Thioredoxin 1 (trxA) from Escherichia coli O157:H7.